The primary structure comprises 248 residues: 2,3-bisphosphoglycerate-dependent phosphoglycerate mutase (248 aa).

Substrate contacts are provided by residues 8–15 (RHGESTWN), 21–22 (TG), arginine 60, 87–90 (ERHY), lysine 98, 114–115 (RR), and 183–184 (GN). Histidine 9 serves as the catalytic Tele-phosphohistidine intermediate. Glutamate 87 serves as the catalytic Proton donor/acceptor.

This sequence belongs to the phosphoglycerate mutase family. BPG-dependent PGAM subfamily. Homodimer.

It carries out the reaction (2R)-2-phosphoglycerate = (2R)-3-phosphoglycerate. It participates in carbohydrate degradation; glycolysis; pyruvate from D-glyceraldehyde 3-phosphate: step 3/5. Catalyzes the interconversion of 2-phosphoglycerate and 3-phosphoglycerate. This chain is 2,3-bisphosphoglycerate-dependent phosphoglycerate mutase, found in Burkholderia orbicola (strain MC0-3).